The primary structure comprises 1413 residues: MKALLDLFKQVQQEEVFDAIKIGLASPDKIRSWSFGEVKKPETINYRTFKPERDGLFCAKIFGPIKDYECLCGKYKRLKHRGVICEKCGVEVTLAKVRRERMGHIELASPVAHIWFLKSLPSRLGMVLDMTLRDIERVLYFEAYVVIEPGMTPLKARQIMTEEDYYNKVEEYGDEFRAEMGAEGVRELLRAINIDEQVETLRTELKNTGSEAKIKKYAKRLKVLEAFQRSGIKPEWMILEVLPVLPPELRPLVPLDGGRFATSDLNDLYRRVINRNNRLKRLLELKAPEIIVRNEKRMLQEAVDSLLDNGRRGKAMTGANKRPLKSLADMIKGKGGRFRQNLLGKRVDYSGRSVIVVGPTLKLHQCGLPKLMALELFKPFIFNKLEVMGVATTIKAAKKEVENQTPVVWDILEEVIREHPVMLNRAPTLHRLGIQAFEPVLIEGKAIQLHPLVCAAFNADFDGDQMAVHVPLSLEAQMEARTLMLASNNVLFPANGDPSIVPSQDIVLGLYYATREAINGKGEGLSFTGVSEVIRAYENKEVELASRVNVRITEMVRNEDTSEGAPEFVPKITLYATTVGRAILSEILPHGLPFSVLNKPLKKKEISRLINTAFRKCGLRATVVFADQLMQSGFRLATRAGISICVDDMLVPPQKETIVGDAAKKVKEYDRQYMSGLVTAQERYNNVVDIWSATSEAVGKAMMEQLSTEPVIDRDGNETRQESFNSIYMMADSGARGSAVQIRQLAGMRGLMAKPDGSIIETPITANFREGLNVLQYFISTHGARKGLADTALKTANSGYLTRRLVDVTQDLVVVEDDCGTSNGVAMKALVEGGEVVEALRDRILGRVAVADVVNPETQETLYESGTLLDETAVEEIERLGIDEVRVRTPLTCETRYGLCAACYGRDLGRGSLVNVGEAVGVIAAQSIGEPGTQLTMRTFHIGGAASRAAVASSVEAKSNGIVRFTATMRYVTNAKGEQIVISRSGEAMITDDFGRERERHKVPYGATLLQLDGATIKAGTQLATWDPLTRPIITEYGGTVKFENVEEGVTVAKQIDDVTGLSTLVVIDVKRRGSQASKSVRPQVKLLDANGEEVKIPGTEHAVQIGFQVGALITVKDGQQVQVGEVLARIPTEAQKTRDITGGLPRVAELFEARSPKDAGILAEVTGTTSFGKDTKGKQRLVITDLEGNQHEFLIAKEKQVLVHDAQVVNKGEMIVDGPADPHDILRLQGIEALSRYIVDEVQDVYRLQGVKINDKHIEVIVRQMLRRVQITDNGDTRFIPGEQVERSDMLDENDRMIAEGKRPASYDNVLLGITKASLSTDSFISAASFQETTRVLTEAAIMGKRDDLRGLKENVIVGRLIPAGTGLAFHKARKAKESSDRERFDQIAAEEAFDFGTPSAPAEEPQHPAAE.

Zn(2+)-binding residues include cysteine 70, cysteine 72, cysteine 85, and cysteine 88. Residues aspartate 460, aspartate 462, and aspartate 464 each coordinate Mg(2+). 4 residues coordinate Zn(2+): cysteine 819, cysteine 893, cysteine 900, and cysteine 903. The segment at 1392–1413 (EEAFDFGTPSAPAEEPQHPAAE) is disordered.

This sequence belongs to the RNA polymerase beta' chain family. In terms of assembly, the RNAP catalytic core consists of 2 alpha, 1 beta, 1 beta' and 1 omega subunit. When a sigma factor is associated with the core the holoenzyme is formed, which can initiate transcription. Requires Mg(2+) as cofactor. It depends on Zn(2+) as a cofactor.

The catalysed reaction is RNA(n) + a ribonucleoside 5'-triphosphate = RNA(n+1) + diphosphate. DNA-dependent RNA polymerase catalyzes the transcription of DNA into RNA using the four ribonucleoside triphosphates as substrates. This Burkholderia cenocepacia (strain ATCC BAA-245 / DSM 16553 / LMG 16656 / NCTC 13227 / J2315 / CF5610) (Burkholderia cepacia (strain J2315)) protein is DNA-directed RNA polymerase subunit beta'.